The sequence spans 386 residues: Succinate--CoA ligase [ADP-forming] subunit beta (386 aa).

The region spanning 9–244 is the ATP-grasp domain; that stretch reads KQILKKYGAV…LNEEDPTEID (236 aa). ATP is bound by residues K46, 53-55, E99, S102, and E107; that span reads GRG. Positions 199 and 213 each coordinate Mg(2+). Substrate contacts are provided by residues N264 and 321–323; that span reads GIM.

Belongs to the succinate/malate CoA ligase beta subunit family. In terms of assembly, heterotetramer of two alpha and two beta subunits. Requires Mg(2+) as cofactor.

The enzyme catalyses succinate + ATP + CoA = succinyl-CoA + ADP + phosphate. The catalysed reaction is GTP + succinate + CoA = succinyl-CoA + GDP + phosphate. It participates in carbohydrate metabolism; tricarboxylic acid cycle; succinate from succinyl-CoA (ligase route): step 1/1. Its function is as follows. Succinyl-CoA synthetase functions in the citric acid cycle (TCA), coupling the hydrolysis of succinyl-CoA to the synthesis of either ATP or GTP and thus represents the only step of substrate-level phosphorylation in the TCA. The beta subunit provides nucleotide specificity of the enzyme and binds the substrate succinate, while the binding sites for coenzyme A and phosphate are found in the alpha subunit. The protein is Succinate--CoA ligase [ADP-forming] subunit beta of Pelagibacter ubique (strain HTCC1062).